Reading from the N-terminus, the 176-residue chain is Late embryogenesis abundant protein 49 (176 aa).

SMP domains follow at residues Thr49 to Lys106 and Asn115 to His171.

The protein belongs to the LEA type SMP family.

It is found in the cytoplasm. The protein localises to the nucleus. LEA proteins are late embryonic proteins abundant in higher plant seed embryos. The function of those proteins is not known. This Arabidopsis thaliana (Mouse-ear cress) protein is Late embryogenesis abundant protein 49.